Consider the following 133-residue polypeptide: UPF0146 protein MTH_1000 (133 aa).

This sequence belongs to the UPF0146 family.

This chain is UPF0146 protein MTH_1000, found in Methanothermobacter thermautotrophicus (strain ATCC 29096 / DSM 1053 / JCM 10044 / NBRC 100330 / Delta H) (Methanobacterium thermoautotrophicum).